The chain runs to 69 residues: Microcin H47 immunity protein MchI (69 aa).

Topologically, residues 1–6 are cytoplasmic; sequence MSYKKL. Residues 7 to 29 form a helical membrane-spanning segment; sequence YQLTAIFSLPLTILLVSLSSLRI. The Periplasmic segment spans residues 30-38; the sequence is VGEGNSYVD. A helical transmembrane segment spans residues 39-61; it reads VFLSFIIFLGFIELIHGIRKILV. Over 62–69 the chain is Cytoplasmic; sequence WSGWKNGS.

It is found in the cell membrane. Functionally, protects a microcin H47-producer cell against microcin H47. The polypeptide is Microcin H47 immunity protein MchI (mchI) (Escherichia coli).